Consider the following 583-residue polypeptide: uncharacterized protein (583 aa).

Residues 1 to 38 show a composition bias toward polar residues; it reads MGQGESIPSRQIQRDASMQAVSSESENINDSDRQNSGF. Disordered stretches follow at residues 1 to 39, 53 to 124, 156 to 197, and 362 to 452; these read MGQG…SGFS, GLRR…AIPQ, TQNN…TAIG, and NSGS…QTDH. The segment covering 70 to 80 has biased composition (basic and acidic residues); the sequence is GNRDRTTERSA. Residues 88–102 are compositionally biased toward low complexity; that stretch reads SLLNRNSPSLRSLSP. 4 stretches are compositionally biased toward polar residues: residues 156–165, 172–191, 384–408, and 420–452; these read TQNNQSTLAS, VSSS…NLES, LISS…NENV, and ASTA…QTDH. An RING-type zinc finger spans residues 525-568; sequence CLVCLSNFELNDECRRLKQCNHFFHRECIDQWLTSSQNSCPLCR. S580 is subject to Phosphoserine.

Its subcellular location is the membrane. This is an uncharacterized protein from Schizosaccharomyces pombe (strain 972 / ATCC 24843) (Fission yeast).